We begin with the raw amino-acid sequence, 51 residues long: Mating pheromone Er-23 (51 aa).

5 cysteine pairs are disulfide-bonded: Cys-3-Cys-24, Cys-6-Cys-16, Cys-13-Cys-47, Cys-27-Cys-40, and Cys-35-Cys-51.

Its subcellular location is the secreted. In terms of biological role, mating ciliate pheromones (or gamones) are diffusible extracellular communication signals that distinguish different intraspecific classes of cells commonly referred to as 'mating types'. They prepare the latter for conjugation by changing their cell surface properties. The protein is Mating pheromone Er-23 (MAT23) of Euplotes raikovi.